We begin with the raw amino-acid sequence, 322 residues long: HPr kinase/phosphorylase (322 aa).

Active-site residues include H146 and K167. Residue 161 to 168 participates in ATP binding; sequence GDSGLGKS. S168 provides a ligand contact to Mg(2+). The active-site Proton acceptor; for phosphorylation activity. Proton donor; for dephosphorylation activity is the D185. Residues 209 to 218 form an important for the catalytic mechanism of both phosphorylation and dephosphorylation region; that stretch reads LEVRGLGLLD. E210 is a binding site for Mg(2+). R250 is a catalytic residue. Residues 271–276 form an important for the catalytic mechanism of dephosphorylation region; it reads QVAAGR.

Belongs to the HPrK/P family. In terms of assembly, homohexamer. Mg(2+) serves as cofactor.

The catalysed reaction is [HPr protein]-L-serine + ATP = [HPr protein]-O-phospho-L-serine + ADP + H(+). It catalyses the reaction [HPr protein]-O-phospho-L-serine + phosphate + H(+) = [HPr protein]-L-serine + diphosphate. In terms of biological role, catalyzes the ATP- as well as the pyrophosphate-dependent phosphorylation of a specific serine residue in HPr, a phosphocarrier protein of the phosphoenolpyruvate-dependent sugar phosphotransferase system (PTS). HprK/P also catalyzes the pyrophosphate-producing, inorganic phosphate-dependent dephosphorylation (phosphorolysis) of seryl-phosphorylated HPr (P-Ser-HPr). The chain is HPr kinase/phosphorylase from Burkholderia ambifaria (strain ATCC BAA-244 / DSM 16087 / CCUG 44356 / LMG 19182 / AMMD) (Burkholderia cepacia (strain AMMD)).